Consider the following 275-residue polypeptide: Lectin (275 aa).

The first 30 residues, 1 to 30 (MASLQTQMISFYLIFLSILLTTIFFFKVNS), serve as a signal peptide directing secretion. 2 residues coordinate D-glucose: aspartate 111 and glycine 129. Positions 149 and 151 each coordinate Mn(2+). Residues aspartate 151, phenylalanine 153, asparagine 155, and aspartate 159 each coordinate Ca(2+). Aspartate 159 and histidine 166 together coordinate Mn(2+). The propeptide occupies 211-217 (NSLEEEN). D-glucose-binding residues include glycine 246 and alanine 247. The propeptide occupies 270 to 275 (KQAADA).

Belongs to the leguminous lectin family. Heterotetramer of two alpha and two beta chains. In terms of processing, the mature form consists of two chains, alpha and beta, produced by cleavage of the immature protein. These remain cleaved, yet fold together to form one subunit.

Functionally, D-mannose specific lectin. The polypeptide is Lectin (Lens culinaris subsp. orientalis (Oriental wild lentil)).